A 525-amino-acid polypeptide reads, in one-letter code: Cytochrome P450 monooxygenase bsc2 (525 aa).

The helical transmembrane segment at 12–32 threads the bilayer; sequence SLFILWLTTLLVSVLATAAYI. N-linked (GlcNAc...) asparagine glycosylation is found at Asn-86 and Asn-317. Residue Cys-456 participates in heme binding.

Belongs to the cytochrome P450 family. The cofactor is heme.

The protein localises to the membrane. The protein operates within mycotoxin biosynthesis. In terms of biological role, cytochrome P450 monooxygenase; part of the gene cluster that mediates the biosynthesis of the diterpene glucoside brassicicene C. In the first step of the brassicicene C biosynthesis, the bifunctional diterpene synthase bsc8 that possesses both prenyl transferase and terpene cyclase activity, converts isopentenyl diphosphate and dimethylallyl diphosphate into geranylgeranyl diphosphate (GGDP) that is further converted into fusicocca-2,10(14)-diene, the first precursor for brassicicene C. Fusicocca-2,10(14)-diene is then substrate of cytochrome P450 monooxygenase bsc1 for hydroxylation at the C-8 position. Oxidation at C-16 position to aldehyde is then catalyzed by the cytochrome P450 monooyxygenase bsc7, yielding fusicocca-2,10(14)-diene-8-beta,16-diol. Follows the isomerization of the double bond and reduction of aldehyde to alcohol catalyzed by the short-chain dehydrogenase/reductase bsc3 to yield the diol compound fusicocca-1,10(14)-diene-8 beta,16-diol. The next step is the oxidation at the C-3 position of fusicocca-2,10(14)-diene-8-beta,16-diol catalyzed by the alpha-ketoglutarate dependent dioxygenase bsc9, to produce a triol compound. Methylation of the hydroxy group at position 16 is performed by the methyltransferase bsc6. 16-O-methylation is followed by oxidation at the C-13 position to ketone and an alkyl shift of the methyl group leads to brassicicene C. Although the probable acetyltransferase bsc4 is included in the gene cluster, no acetylation reactions are necessary for brassicicene C biosynthesis. However, the fact that brassicicene E, which is a structurally related compound having an acetoxy group at position 12, was previously isolated from another strain of A.brassicicola suggests that the ATCC 96836 strain might also produce a small amount of brassicicene E. This is Cytochrome P450 monooxygenase bsc2 from Alternaria brassicicola (Dark leaf spot agent).